Consider the following 307-residue polypeptide: UDP-N-acetylenolpyruvoylglucosamine reductase (307 aa).

The FAD-binding PCMH-type domain occupies lysine 33 to glycine 198. Arginine 177 is an active-site residue. Serine 227 (proton donor) is an active-site residue. Glutamate 297 is an active-site residue.

Belongs to the MurB family. The cofactor is FAD.

The protein resides in the cytoplasm. It catalyses the reaction UDP-N-acetyl-alpha-D-muramate + NADP(+) = UDP-N-acetyl-3-O-(1-carboxyvinyl)-alpha-D-glucosamine + NADPH + H(+). It functions in the pathway cell wall biogenesis; peptidoglycan biosynthesis. Its function is as follows. Cell wall formation. The sequence is that of UDP-N-acetylenolpyruvoylglucosamine reductase from Clostridium tetani (strain Massachusetts / E88).